The primary structure comprises 170 residues: Acetyl-CoA decarbonylase/synthase complex subunit epsilon 1 (170 aa).

This sequence belongs to the CdhB family. As to quaternary structure, heterotetramer of two alpha and two epsilon subunits. The ACDS complex is made up of alpha, epsilon, beta, gamma and delta subunits with a probable stoichiometry of (alpha(2)epsilon(2))(4)-beta(8)-(gamma(1)delta(1))(8).

Its pathway is one-carbon metabolism; methanogenesis from acetate. Its function is as follows. Part of a complex that catalyzes the reversible cleavage of acetyl-CoA, allowing growth on acetate as sole source of carbon and energy. The alpha-epsilon subcomponent functions as a carbon monoxide dehydrogenase. The precise role of the epsilon subunit is unclear; it may have a stabilizing role within the alpha(2)epsilon(2) component and/or be involved in electron transfer to FAD during a potential FAD-mediated CO oxidation. This Methanosarcina thermophila protein is Acetyl-CoA decarbonylase/synthase complex subunit epsilon 1 (cdhB1).